The chain runs to 62 residues: Large ribosomal subunit protein uL29 (62 aa).

It belongs to the universal ribosomal protein uL29 family.

This chain is Large ribosomal subunit protein uL29, found in Amoebophilus asiaticus (strain 5a2).